Reading from the N-terminus, the 200-residue chain is Probable gluconokinase (200 aa).

Residue 34–41 participates in ATP binding; it reads GVSGSGKT.

Belongs to the gluconokinase GntK/GntV family.

The enzyme catalyses D-gluconate + ATP = 6-phospho-D-gluconate + ADP + H(+). It participates in carbohydrate acid metabolism; D-gluconate degradation. This Dictyostelium discoideum (Social amoeba) protein is Probable gluconokinase.